The chain runs to 444 residues: N-succinylarginine dihydrolase (444 aa).

Residues 19–28, asparagine 110, and 137–138 contribute to the substrate site; these read SGLSVGNIAS and HR. The active site involves glutamate 174. Residue arginine 214 coordinates substrate. Residue histidine 250 is part of the active site. Substrate is bound by residues aspartate 252 and asparagine 362. The active-site Nucleophile is cysteine 368.

It belongs to the succinylarginine dihydrolase family. As to quaternary structure, homodimer.

It carries out the reaction N(2)-succinyl-L-arginine + 2 H2O + 2 H(+) = N(2)-succinyl-L-ornithine + 2 NH4(+) + CO2. It functions in the pathway amino-acid degradation; L-arginine degradation via AST pathway; L-glutamate and succinate from L-arginine: step 2/5. Functionally, catalyzes the hydrolysis of N(2)-succinylarginine into N(2)-succinylornithine, ammonia and CO(2). The polypeptide is N-succinylarginine dihydrolase (Aliivibrio fischeri (strain ATCC 700601 / ES114) (Vibrio fischeri)).